We begin with the raw amino-acid sequence, 1235 residues long: MRSRSNSGVRLDGYARLVQQTILCYQNPVTGLLSASHEQKDAWVRDNIYSILAVWGLGMAYRKNADRDEDKAKAYELEQNVVKLMRGLLQCMMRQVDKVEKFKYTQSTKDSLHAKYNTATCSTVVGDDQWGHLQVDATSLFLLFLAQMTASGLRIIFTLDEVAFIQNLVFYIEAAYKVADYGMWERGDKTNQGIPELNASSVGMAKAALEAIDELDLFGAHGGRKSVIHVLPDEVEHCQSILFSMLPRASTSKEIDAGLLSIISFPAFAVEDANLVNVTKSEIISKLQGRYGCCRFLRDGYKTPREDPNRLHYDPAELKLFENIECEWPVFWTYFIIDGIFNGDALQVQEYQEALEGILIRGKDGIRLVPELYAIPPNKVDEEYKNPHTVDRVPLGKLPHLWGQSLYILSSLLAEGFLATGEIDPLNRRFSTSVKPDVVVQVTVLAENSHIKELLRKHGVDVQSIADIYPIRVQPGRILSHIYAKLGRNKNMKLSGRPYRHIGVLGTSKLYVIRNQIFTFTPQFTDQHHFYLALDNEMIVEMLRIELAYLCTCWRMTGRPTLTFPITHTMLTNDGSDIHSAVLSTIRKLEDGYFGGARVQLGNLSEFLTTSFYTYLTFLDPDCDEKLFDDASEGSFSPDSDSDLGGYLEETYNQVTESQDELDKYINHLLQSTYSKCHLPPLCKKMEDHNVFSAIHSTRDILSMMAKAKGLEVPFAPMTLPTKALSVHRKSLNLVDSPQPLLKRILKRLHWPKDERGDVDCEKLVEQLKDCCTLQDQADILYILYVLKGPSWDTALSGQHGVTVHNLLSELYGKAGLNQEWGLIRYISGLLRKKVEVLAEACADLLSHQKQLTVGLPPEPREKTISAPLPPEELTELIYEASGEDISIAVLTQEIVVYLAMYVRAQPALFVEMLRLRIGLIIQVMATELARSLNCSGEEASESLMNLSPFDMKNLLHHILSGKEFGVERSMRPIHSSASSPAISIHEVGHTGVTKTERSGINRLRSEMKQMTRRFSADEQFFPVSQTVSSSAYSKSVRSSTPSSPTGTSSSDSGGHHISWGERQGQWLRRRRLDGAINRVPVGFYQRVWKILQKCHGLSIDGYVLPSSTTREMTPQEIKFAVHVESVLNRVSQPEYRQLLVEAIMVLTLLSDTEMESIGGIIHVDQIVQMANQLFLQEQISTGAMDTLEKDQATGICHFFYDSAPSGAYGTMTYLTRAVASHLQELLPSSGCQTQ.

Ser697, Ser731, and Ser737 each carry phosphoserine. A calmodulin-binding region spans residues 808–838 (LSELYGKAGLNQEWGLIRYISGLLRKKVEVL). A compositionally biased stretch (low complexity) spans 976–986 (SSASSPAISIH). Residues 976-1002 (SSASSPAISIHEVGHTGVTKTERSGIN) are disordered. Phosphoserine is present on residues Ser984, Ser1016, and Ser1044. The segment covering 1032–1053 (AYSKSVRSSTPSSPTGTSSSDS) has biased composition (low complexity). The interval 1032 to 1060 (AYSKSVRSSTPSSPTGTSSSDSGGHHISW) is disordered. The segment at 1059–1099 (SWGERQGQWLRRRRLDGAINRVPVGFYQRVWKILQKCHGLS) is calmodulin-binding. Residue Cys1232 is the site of S-farnesyl cysteine attachment.

This sequence belongs to the phosphorylase b kinase regulatory chain family. As to quaternary structure, hexadecamer of 4 heterotetramers, each composed of alpha, beta, gamma, and delta subunits. Alpha (PHKA1 or PHKA2) and beta (PHKB) are regulatory subunits, gamma (PHKG1 or PHKG2) is the catalytic subunit, and delta is calmodulin. Although the final Cys may be farnesylated, the terminal tripeptide is probably not removed, and the C-terminus is not methylated. Predominantly expressed in liver and other non-muscle tissues.

The protein localises to the cell membrane. It functions in the pathway glycan biosynthesis; glycogen metabolism. Its activity is regulated as follows. By phosphorylation of various serine residues and by calcium. Its function is as follows. Phosphorylase b kinase catalyzes the phosphorylation of serine in certain substrates, including troponin I. The alpha chain may bind calmodulin. In Oryctolagus cuniculus (Rabbit), this protein is Phosphorylase b kinase regulatory subunit alpha, liver isoform (PHKA2).